The sequence spans 122 residues: Large ribosomal subunit protein uL14c (122 aa).

It belongs to the universal ribosomal protein uL14 family. As to quaternary structure, part of the 50S ribosomal subunit.

It localises to the plastid. The protein resides in the chloroplast. Its function is as follows. Binds to 23S rRNA. The chain is Large ribosomal subunit protein uL14c from Manihot esculenta (Cassava).